Consider the following 258-residue polypeptide: Indole-3-glycerol phosphate synthase (258 aa).

This sequence belongs to the TrpC family.

It catalyses the reaction 1-(2-carboxyphenylamino)-1-deoxy-D-ribulose 5-phosphate + H(+) = (1S,2R)-1-C-(indol-3-yl)glycerol 3-phosphate + CO2 + H2O. It participates in amino-acid biosynthesis; L-tryptophan biosynthesis; L-tryptophan from chorismate: step 4/5. This Geobacillus thermodenitrificans (strain NG80-2) protein is Indole-3-glycerol phosphate synthase.